Reading from the N-terminus, the 499-residue chain is Anaerobic nitric oxide reductase flavorubredoxin (499 aa).

A zinc metallo-hydrolase region spans residues 30-210 (TKGTSYNSYL…PFSALVTAKI (181 aa)). 6 residues coordinate Fe cation: H79, E81, D83, H147, D166, and H227. The 140-residue stretch at 254–393 (ITLFYDSMSN…LCREHGQFIA (140 aa)) folds into the Flavodoxin-like domain. FMN contacts are provided by residues 260-264 (SMSNN) and 342-369 (AFGSYGWNGGAVDRIHSRLTDAGFETAV). Residues 447–498 (KQCMLCTVCNWVYDPEIGEPNQGVEPNTAWIDVPDYFLCPECNLGKDVFVEV) enclose the Rubredoxin-like domain. Fe cation contacts are provided by C452, C455, C485, and C488.

It in the N-terminal section; belongs to the zinc metallo-hydrolase group 3 family. As to quaternary structure, homotetramer. Fe cation serves as cofactor. Requires FMN as cofactor.

Its subcellular location is the cytoplasm. The protein operates within nitrogen metabolism; nitric oxide reduction. Functionally, anaerobic nitric oxide reductase; uses NADH to detoxify nitric oxide (NO), protecting several 4Fe-4S NO-sensitive enzymes. Has at least 2 reductase partners, only one of which (NorW, flavorubredoxin reductase) has been identified. NO probably binds to the di-iron center; electrons enter from the NorW at rubredoxin and are transferred sequentially to the FMN center and the di-iron center. Also able to function as an aerobic oxygen reductase. The polypeptide is Anaerobic nitric oxide reductase flavorubredoxin (Aliivibrio salmonicida (strain LFI1238) (Vibrio salmonicida (strain LFI1238))).